The sequence spans 348 residues: NADH-ubiquinone oxidoreductase chain 2 (348 aa).

Transmembrane regions (helical) follow at residues 3-23 (PIII…VLMS), 25-45 (HWFM…PVLM), 59-79 (YFLT…INLI), 93-115 (TAST…HFWV), 149-169 (LNMT…GWGG), 178-198 (ILAF…MFNP), 201-221 (TLLN…ILIF), 239-259 (IMTV…PLSG), 276-296 (IALA…YMRL), and 326-346 (LPTL…MMML).

The protein belongs to the complex I subunit 2 family. As to quaternary structure, core subunit of respiratory chain NADH dehydrogenase (Complex I) which is composed of 45 different subunits. Interacts with TMEM242.

It localises to the mitochondrion inner membrane. The catalysed reaction is a ubiquinone + NADH + 5 H(+)(in) = a ubiquinol + NAD(+) + 4 H(+)(out). Its function is as follows. Core subunit of the mitochondrial membrane respiratory chain NADH dehydrogenase (Complex I) which catalyzes electron transfer from NADH through the respiratory chain, using ubiquinone as an electron acceptor. Essential for the catalytic activity and assembly of complex I. This Thyroptera tricolor (Spix's disk-winged bat) protein is NADH-ubiquinone oxidoreductase chain 2.